Here is a 176-residue protein sequence, read N- to C-terminus: Disulfide bond formation protein B (176 aa).

The Cytoplasmic segment spans residues 1-11 (MLQLTTYRNLQ). The helical transmembrane segment at 12 to 28 (VFLVIMTAIGMSFALFF) threads the bilayer. Over 29 to 46 (LQRYMGFSPCPLCIFQRI) the chain is Periplasmic. Cys-38 and Cys-41 are disulfide-bonded. Residues 47–63 (GLMIMGGFALIAALFHP) form a helical membrane-spanning segment. Topologically, residues 64–70 (KSMVIRL) are cytoplasmic. A helical membrane pass occupies residues 71–88 (LLWLGSLAGIGWAAIVAG). Topologically, residues 89–145 (RHVWLQHLPADQVPSCGPGLDYWLDTLPMQQVLKEVFAGSGECASIEWTFLGLSIPE) are periplasmic. A disulfide bridge connects residues Cys-104 and Cys-131. A helical transmembrane segment spans residues 146–164 (QSLILFSILILTHLLILWR). At 165 to 176 (IVRPSTPKPLAR) the chain is on the cytoplasmic side.

This sequence belongs to the DsbB family.

It localises to the cell inner membrane. Required for disulfide bond formation in some periplasmic proteins. Acts by oxidizing the DsbA protein. This chain is Disulfide bond formation protein B, found in Psychrobacter arcticus (strain DSM 17307 / VKM B-2377 / 273-4).